The chain runs to 60 residues: MAKVRITQVRSTIKCPMRQKLTIKALKLGRINKSVELEFTPQIQGMVRQVHHLVTTENIA.

It belongs to the universal ribosomal protein uL30 family. Part of the 50S ribosomal subunit.

The sequence is that of Large ribosomal subunit protein uL30 from Amoebophilus asiaticus (strain 5a2).